The sequence spans 206 residues: Outer-membrane lipoprotein carrier protein (206 aa).

An N-terminal signal peptide occupies residues 1 to 21 (MKKLLCAVLLSPLLYSNAVLA).

Belongs to the LolA family. In terms of assembly, monomer.

It localises to the periplasm. In terms of biological role, participates in the translocation of lipoproteins from the inner membrane to the outer membrane. Only forms a complex with a lipoprotein if the residue after the N-terminal Cys is not an aspartate (The Asp acts as a targeting signal to indicate that the lipoprotein should stay in the inner membrane). In Shewanella sp. (strain ANA-3), this protein is Outer-membrane lipoprotein carrier protein.